We begin with the raw amino-acid sequence, 229 residues long: tRNA pseudouridine synthase B (229 aa).

D42 (nucleophile) is an active-site residue.

The protein belongs to the pseudouridine synthase TruB family. Type 1 subfamily.

The catalysed reaction is uridine(55) in tRNA = pseudouridine(55) in tRNA. In terms of biological role, responsible for synthesis of pseudouridine from uracil-55 in the psi GC loop of transfer RNAs. This Ureaplasma urealyticum serovar 10 (strain ATCC 33699 / Western) protein is tRNA pseudouridine synthase B.